Consider the following 547-residue polypeptide: CAP-Gly domain-containing linker protein 3 (547 aa).

The tract at residues 1-49 (MTKTDPAPMAPPPRGEEEEEEEEDEPVPEAPSPTQERRQKPVVHPSAPA) is disordered. A compositionally biased stretch (acidic residues) spans 16–27 (EEEEEEEEDEPV). ANK repeat units lie at residues 117 to 155 (TDMT…DVTL), 160 to 189 (TNMN…PRVV), and 197 to 226 (NHGS…NPAL). Positions 314 to 356 (GTTEFASGQWVGVELDEPEGKNDGSVGGVRYFICPPKQGLFAS) constitute a CAP-Gly 1 domain. A disordered region spans residues 365-413 (DAPPSSVTSTPRTPRMDFSRVTGKGRREHKGKKKTPSSPSLGSLQQRDR). A compositionally biased stretch (low complexity) spans 367 to 377 (PPSSVTSTPRT). A Phosphothreonine modification is found at Thr-374. Residues 387-399 (GKGRREHKGKKKT) show a composition bias toward basic residues. A compositionally biased stretch (polar residues) spans 400–409 (PSSPSLGSLQ). Ser-401 carries the phosphoserine modification. Residues 436–478 (GKTDFAPGYWYGIELDQPTGKHDGSVFGVRYFTCPPRHGVFAP) form the CAP-Gly 2 domain. The tract at residues 488–547 (STDSPGDSVGAKKVHQVTMTQPKRTFTTVRTPKDIASENSISRLLFCCWFPWMLRAEMQS) is goLD. S-palmitoyl cysteine attachment occurs at residues Cys-534 and Cys-535.

As to quaternary structure, homodimer. Interacts with AKT1 and AKT2; when AKT1 and AKT2 are phosphorylated and activated, affinity is higher for AKT2. Interacts with ZDHHC13 (via ANK repeats). Interacts with ZDHHC17 (via ANK repeats). In terms of processing, palmitoylation by ZDHHC17 regulates association with the plasma membrane.

The protein localises to the cell membrane. Its subcellular location is the cytoplasm. It localises to the golgi apparatus. It is found in the golgi stack. Its function is as follows. Functions as a cytoplasmic linker protein. Involved in TGN-endosome dynamics. May modulate the cellular compartmentalization of AKT kinase family and promote its cell membrane localization, thereby playing a role in glucose transport in adipocytes. This chain is CAP-Gly domain-containing linker protein 3 (CLIP3), found in Pongo abelii (Sumatran orangutan).